We begin with the raw amino-acid sequence, 729 residues long: Fatty acid oxidation complex subunit alpha (729 aa).

Positions 1-189 (MLYQSETLQL…KIGLVDAVVD (189 aa)) are enoyl-CoA hydratase/isomerase. D296 lines the substrate pocket. Residues 311-729 (AAPKLAAVLG…LLDVSTNQPA (419 aa)) are 3-hydroxyacyl-CoA dehydrogenase. NAD(+) is bound by residues M324, D343, 400-402 (VVE), K407, and S429. The active-site For 3-hydroxyacyl-CoA dehydrogenase activity is the H450. N453 lines the NAD(+) pocket. The substrate site is built by N500 and Y660.

The protein in the N-terminal section; belongs to the enoyl-CoA hydratase/isomerase family. In the C-terminal section; belongs to the 3-hydroxyacyl-CoA dehydrogenase family. Heterotetramer of two alpha chains (FadB) and two beta chains (FadA).

It catalyses the reaction a (3S)-3-hydroxyacyl-CoA + NAD(+) = a 3-oxoacyl-CoA + NADH + H(+). The enzyme catalyses a (3S)-3-hydroxyacyl-CoA = a (2E)-enoyl-CoA + H2O. The catalysed reaction is a 4-saturated-(3S)-3-hydroxyacyl-CoA = a (3E)-enoyl-CoA + H2O. It carries out the reaction (3S)-3-hydroxybutanoyl-CoA = (3R)-3-hydroxybutanoyl-CoA. It catalyses the reaction a (3Z)-enoyl-CoA = a 4-saturated (2E)-enoyl-CoA. The enzyme catalyses a (3E)-enoyl-CoA = a 4-saturated (2E)-enoyl-CoA. Its pathway is lipid metabolism; fatty acid beta-oxidation. Functionally, involved in the aerobic and anaerobic degradation of long-chain fatty acids via beta-oxidation cycle. Catalyzes the formation of 3-oxoacyl-CoA from enoyl-CoA via L-3-hydroxyacyl-CoA. It can also use D-3-hydroxyacyl-CoA and cis-3-enoyl-CoA as substrate. This chain is Fatty acid oxidation complex subunit alpha, found in Yersinia pestis bv. Antiqua (strain Antiqua).